The following is a 407-amino-acid chain: Imidazolonepropionase (407 aa).

His73 and His75 together coordinate Fe(3+). Zn(2+) contacts are provided by His73 and His75. 4-imidazolone-5-propanoate is bound by residues Arg82, Tyr145, and His178. Residue Tyr145 participates in N-formimidoyl-L-glutamate binding. A Fe(3+)-binding site is contributed by His243. His243 contributes to the Zn(2+) binding site. Residue Gln246 participates in 4-imidazolone-5-propanoate binding. A Fe(3+)-binding site is contributed by Asp318. Zn(2+) is bound at residue Asp318. Asn320 and Gly322 together coordinate N-formimidoyl-L-glutamate. Thr323 contacts 4-imidazolone-5-propanoate.

This sequence belongs to the metallo-dependent hydrolases superfamily. HutI family. Zn(2+) is required as a cofactor. Requires Fe(3+) as cofactor.

The protein resides in the cytoplasm. The enzyme catalyses 4-imidazolone-5-propanoate + H2O = N-formimidoyl-L-glutamate. It functions in the pathway amino-acid degradation; L-histidine degradation into L-glutamate; N-formimidoyl-L-glutamate from L-histidine: step 3/3. Functionally, catalyzes the hydrolytic cleavage of the carbon-nitrogen bond in imidazolone-5-propanoate to yield N-formimidoyl-L-glutamate. It is the third step in the universal histidine degradation pathway. The polypeptide is Imidazolonepropionase (Serratia proteamaculans (strain 568)).